A 71-amino-acid chain; its full sequence is UPF0434 protein APH_0052 (71 aa).

Positions Arg52–Ser63 are enriched in basic and acidic residues. The interval Arg52–Gln71 is disordered.

The protein belongs to the UPF0434 family.

In Anaplasma phagocytophilum (strain HZ), this protein is UPF0434 protein APH_0052.